The chain runs to 340 residues: Phosphoribosylformylglycinamidine cyclo-ligase (340 aa).

Belongs to the AIR synthase family.

It localises to the cytoplasm. It carries out the reaction 2-formamido-N(1)-(5-O-phospho-beta-D-ribosyl)acetamidine + ATP = 5-amino-1-(5-phospho-beta-D-ribosyl)imidazole + ADP + phosphate + H(+). It functions in the pathway purine metabolism; IMP biosynthesis via de novo pathway; 5-amino-1-(5-phospho-D-ribosyl)imidazole from N(2)-formyl-N(1)-(5-phospho-D-ribosyl)glycinamide: step 2/2. This Streptococcus agalactiae serotype III (strain NEM316) protein is Phosphoribosylformylglycinamidine cyclo-ligase.